The sequence spans 107 residues: Protein HitA (107 aa).

The 103-residue stretch at 5–107 (IFCKIAAKEI…LHIHIMGTPV (103 aa)) folds into the HIT domain. The short motif at 97-101 (HLHIH) is the Histidine triad motif element.

This chain is Protein HitA (hitA), found in Neisseria gonorrhoeae.